The following is a 454-amino-acid chain: tRNA modification GTPase MnmE (454 aa).

Positions 23, 80, and 120 each coordinate (6S)-5-formyl-5,6,7,8-tetrahydrofolate. One can recognise a TrmE-type G domain in the interval 216–377 (GMKVVIAGRP…LRNHLKQSMG (162 aa)). Position 226 (Asn226) interacts with K(+). GTP contacts are provided by residues 226 to 231 (NAGKSS), 245 to 251 (TDIAGTT), 270 to 273 (DTAG), 335 to 338 (NKAD), and 358 to 360 (SAR). Mg(2+) is bound at residue Ser230. Positions 245, 247, and 250 each coordinate K(+). Residue Thr251 participates in Mg(2+) binding. Lys454 serves as a coordination point for (6S)-5-formyl-5,6,7,8-tetrahydrofolate.

It belongs to the TRAFAC class TrmE-Era-EngA-EngB-Septin-like GTPase superfamily. TrmE GTPase family. In terms of assembly, homodimer. Heterotetramer of two MnmE and two MnmG subunits. The cofactor is K(+).

It localises to the cytoplasm. In terms of biological role, exhibits a very high intrinsic GTPase hydrolysis rate. Involved in the addition of a carboxymethylaminomethyl (cmnm) group at the wobble position (U34) of certain tRNAs, forming tRNA-cmnm(5)s(2)U34. This is tRNA modification GTPase MnmE from Salmonella typhi.